We begin with the raw amino-acid sequence, 585 residues long: Pyruvate kinase (585 aa).

Arg-32 serves as a coordination point for substrate. K(+) is bound by residues Asn-34, Ser-36, Asp-66, and Thr-67. 34 to 37 is an ATP binding site; the sequence is NFSH. 2 residues coordinate ATP: Arg-73 and Lys-156. Position 221 (Glu-221) interacts with Mg(2+). The substrate site is built by Gly-244, Asp-245, and Thr-277. A Mg(2+)-binding site is contributed by Asp-245.

The protein belongs to the pyruvate kinase family. In the C-terminal section; belongs to the PEP-utilizing enzyme family. Requires Mg(2+) as cofactor. K(+) is required as a cofactor.

The enzyme catalyses pyruvate + ATP = phosphoenolpyruvate + ADP + H(+). Its pathway is carbohydrate degradation; glycolysis; pyruvate from D-glyceraldehyde 3-phosphate: step 5/5. The sequence is that of Pyruvate kinase (pyk) from Staphylococcus aureus (strain MRSA252).